A 499-amino-acid polypeptide reads, in one-letter code: Putative antiporter subunit mnhD2 (499 aa).

The next 14 helical transmembrane spans lie at 3-23, 33-53, 79-99, 109-129, 131-151, 162-182, 210-230, 241-261, 272-292, 309-329, 331-351, 370-390, 404-424, and 452-472; these read LSNL…ILVF, YLYL…LIYV, LSLI…AYGF, YHLP…FLTS, LFNL…LITL, IIYV…IGLL, ISLI…FMWL, LAAL…IRFF, IHPL…IGVI, IGFI…GAIF, LVND…LVYI, FGVA…FSGF, GNYI…YSLF, and ILSI…VVLN.

The protein belongs to the CPA3 antiporters (TC 2.A.63) subunit D family. In terms of assembly, may form a heterooligomeric complex that consists of seven subunits: mnhA2, mnhB2, mnhC2, mnhD2, mnhE2, mnhF2 and mnhG2.

It is found in the cell membrane. In terms of biological role, expression of the mnh2 operon in E.coli is not able to catalyze Na(+)Li(+)/H(+) antiport. It does however confer higher growth rates than the control strain at up to pH 9.5. The operon may encode an NADH-ubiquinone oxidoreductase. This is Putative antiporter subunit mnhD2 (mnhD2) from Staphylococcus aureus.